Reading from the N-terminus, the 124-residue chain is Killer toxin (124 aa).

Positions 1 to 19 (MKVSLVYGLTCFLDATSSA) are cleaved as a signal peptide. Residues 20 to 37 (LPSAMAAANSESSALEKR) constitute a propeptide that is removed on maturation. Cystine bridges form between C45–C55, C48–C108, C64–C94, C85–C102, and C103–C109.

As to quaternary structure, monomer.

Its subcellular location is the secreted. Its function is as follows. This toxin kills sensitive strains of yeast. The protein is Killer toxin (HSK) of Cyberlindnera saturnus (Yeast).